Reading from the N-terminus, the 670-residue chain is MSLADLTKTNIDEHFFGVALENNRRSAACKRSPGTGDFSRNSNASNKSVDYSRSQCSCGSLSSQYDYSEDFLCDCSEKAINRNYLKQPVVKEKEKKKYNVSKISQSKGQKEISVEKKHTWNASLFNSQIHMIAQRRDAMAHRILSARLHKIKGLKNELADMHHKLEAILTENQFLKQLQLRHLKAIGKYENSQNNLPQIMAKHQNEVKNLRQLLRKSQEKERTLSRKLRETDSQLLKTKDILQALQKLSEDKNLAEREELTHKLSIITTKMDANDKKIQSLEKQLRLNCRAFSRQLAIETRKTLAAQTATKTLQVEVKHLQQKLKEKDRELEIKNIYSHRILKNLHDTEDYPKVSSTKSVQADRKILPFTSMRHQGTQKSDVPPLTTKGKKATGNIDHKEKSTEINHEIPHCVNKLPKQEDSKRKYEDLSGEEKHLEVQILLENTGRQKDKKEDQEKKNIFVKEEQELPPKIIEVIHPERESNQEDVLVREKFKRSMQRNGVDDTLGKGTAPYTKGPLRQRRHYSFTEATENLHHGLPASGGPANAGNMRYSHSTGKHLSNREEMELEHSDSGYEPSFGKSSRIKVKDTTFRDKKSSLMEELFGSGYVLKTDQSSPGVAKGSEEPLQSKESHPLPPSQASTSHAFGDSKVTVVNSIKPSSPTEGKRKIII.

The segment at K30–Y51 is disordered. Residues F38 to Y51 are compositionally biased toward polar residues. Coiled-coil stretches lie at residues L148–E259 and A305–I336. The tract at residues H374–T393 is disordered. Residues E420 to I440 are a coiled coil. Disordered regions lie at residues R495 to G516, K557 to K580, and L609 to I670. Composition is skewed to basic and acidic residues over residues S560–S572 and G621–H632. Residues T651–T662 are compositionally biased toward polar residues.

The protein belongs to the LCA5 family.

The polypeptide is Lebercilin-like protein (LCA5L) (Homo sapiens (Human)).